The sequence spans 322 residues: ATP-dependent 6-phosphofructokinase (322 aa).

Gly11 provides a ligand contact to ATP. 21–25 (RAVVR) serves as a coordination point for ADP. ATP is bound by residues 72 to 73 (RC) and 102 to 105 (GDGS). Residue Asp103 participates in Mg(2+) binding. A substrate-binding site is contributed by 127–129 (TID). Asp129 functions as the Proton acceptor in the catalytic mechanism. Residue Arg156 participates in ADP binding. Substrate is bound by residues Arg164 and 171 to 173 (MGR). ADP is bound by residues 187–189 (GAE), Arg213, and 215–217 (KKH). Substrate is bound by residues Glu224, Arg245, and 251–254 (HVQR).

The protein belongs to the phosphofructokinase type A (PFKA) family. ATP-dependent PFK group I subfamily. Prokaryotic clade 'B1' sub-subfamily. As to quaternary structure, homotetramer. It depends on Mg(2+) as a cofactor.

Its subcellular location is the cytoplasm. It catalyses the reaction beta-D-fructose 6-phosphate + ATP = beta-D-fructose 1,6-bisphosphate + ADP + H(+). Its pathway is carbohydrate degradation; glycolysis; D-glyceraldehyde 3-phosphate and glycerone phosphate from D-glucose: step 3/4. Its activity is regulated as follows. Allosterically activated by ADP and other diphosphonucleosides, and allosterically inhibited by phosphoenolpyruvate. Functionally, catalyzes the phosphorylation of D-fructose 6-phosphate to fructose 1,6-bisphosphate by ATP, the first committing step of glycolysis. This is ATP-dependent 6-phosphofructokinase from Staphylococcus aureus (strain JH1).